Reading from the N-terminus, the 977-residue chain is Collagen alpha-2(I) chain (977 aa).

The interval 1–977 (SGGFDFSFLP…RGSQGSQGPS (977 aa)) is disordered. Residues Pro10, Pro13, Pro28, and Pro34 each carry the 4-hydroxyproline modification. The segment covering 17-66 (GPMGLMGPRGPPGASGAPGPQGFQGPAGEPGEPGQTGPAGARGPAGPPGK) has biased composition (low complexity). At Lys91 the chain carries 5-hydroxylysine; alternate. Lys91 is a glycosylation site (O-linked (Gal...) hydroxylysine; alternate). 2 stretches are compositionally biased toward low complexity: residues 138–159 (SRGS…SAGP) and 205–226 (PGAN…AGAP). Positions 258 to 267 (GESGGKGEPG) are enriched in gly residues. The segment covering 268–278 (SAGPQGPPGSS) has biased composition (low complexity). Residues 300–309 (GLRGGPGSRG) are compositionally biased toward gly residues. The span at 322-338 (PAGARGASGPAGVRGPS) shows a compositional bias: low complexity. 4-hydroxyproline is present on residues Pro344 and Pro347. Low complexity predominate over residues 373–392 (LPGIDGRPGPIGPAGARGEA). The segment covering 441 to 450 (GVQGGKGEQG) has biased composition (gly residues). Low complexity-rich tracts occupy residues 497–514 (SGES…SRGP) and 526–536 (EPGVVGAPGTA). The span at 537-546 (GPAGSGGLPG) shows a compositional bias: gly residues. Low complexity-rich tracts occupy residues 569–605 (VGTT…AGPA) and 620–640 (VGPA…QPGA). The segment covering 641 to 650 (KGERGTKGPK) has biased composition (basic and acidic residues). Residues 658-668 (PTGPVGSAGPA) are compositionally biased toward low complexity. Residues 678 to 687 (GSRGDGGPPG) are compositionally biased toward gly residues. Over residues 689–698 (TGFPGAAGRT) the composition is skewed to low complexity. Positions 735–744 (GETGAGGPPG) are enriched in gly residues. 2 stretches are compositionally biased toward low complexity: residues 752-779 (SGEP…LGLP) and 787-797 (LPGVAGAVGEP). Over residues 798–817 (GPLGIGPPGARGPSGAGVNG) the composition is skewed to gly residues. Low complexity-rich tracts occupy residues 853-871 (PVGA…PAGK) and 878-898 (PGPA…PSGP). Residues 902–913 (RGDKGEAGDKGP) are compositionally biased toward basic and acidic residues.

It belongs to the fibrillar collagen family. In terms of assembly, trimers of one alpha 2(I) and two alpha 1(I) chains. Interacts (via C-terminus) with TMEM131 (via PapD-L domain); the interaction is direct and is involved in assembly and TRAPPIII ER-to-Golgi transport complex-dependent secretion of collagen. Prolines at the third position of the tripeptide repeating unit (G-X-Y) are hydroxylated in some or all of the chains. In terms of tissue distribution, expressed in bones.

It localises to the secreted. It is found in the extracellular space. The protein localises to the extracellular matrix. Type I collagen is a member of group I collagen (fibrillar forming collagen). This Scelidodon sp. (strain SLP-2019) (South American ground sloth) protein is Collagen alpha-2(I) chain.